The following is a 287-amino-acid chain: Leukocyte-associated immunoglobulin-like receptor 1 (287 aa).

The first 21 residues, 1–21 (MSPHPTALLGLVLCLAQTIHT), serve as a signal peptide directing secretion. The Extracellular portion of the chain corresponds to 22-165 (QEEDLPRPSI…SQGLKAEHLY (144 aa)). In terms of domain architecture, Ig-like C2-type spans 29–117 (PSISAEPGTV…KWSEQSDYLE (89 aa)). Residues C49 and C101 are joined by a disulfide bond. An N-linked (GlcNAc...) asparagine glycan is attached at N69. The segment at 121-155 (KESSGGPDSPDTEPGSSAGPTQRPSDNSHNEHAPA) is disordered. The span at 134-145 (PGSSAGPTQRPS) shows a compositional bias: polar residues. Residues 166–186 (ILIGVSVVFLFCLLLLVLFCL) traverse the membrane as a helical segment. Residues 187–287 (HRQNQIKQGP…SITYAAVARH (101 aa)) are Cytoplasmic-facing. The interval 192 to 211 (IKQGPPRSKDEEQKPQQRPD) is disordered. Residues 198-208 (RSKDEEQKPQQ) show a composition bias toward basic and acidic residues. 2 consecutive short sequence motifs (ITIM motif) follow at residues 249 to 254 (VTYAQL) and 279 to 284 (ITYAAV). Phosphotyrosine is present on residues Y251 and Y281.

As to quaternary structure, interacts with SH2 domains of tyrosine-protein phosphatases PTPN6 and PTPN11. The interaction with PTPN6 is constitutive. Interacts with the SH2 domain of CSK. Binds with high affinity to extracellular matrix collagens, the interaction is functionally important. In terms of processing, phosphorylation at Tyr-251 and Tyr-281 activates it. May be phosphorylated by LCK. N-glycosylated. Expressed on the majority of peripheral mononuclear cells, including natural killer (NK) cells, T-cells, B-cells, monocytes, and dendritic cells. Highly expressed in naive T-cells and B-cells but no expression on germinal center B-cells. Abnormally low expression in naive B-cells from HIV-1 infected patients. Very low expression in NK cells from a patient with chronic active Epstein-Barr virus infection.

The protein resides in the cell membrane. Functionally, functions as an inhibitory receptor that plays a constitutive negative regulatory role on cytolytic function of natural killer (NK) cells, B-cells and T-cells. Activation by Tyr phosphorylation results in recruitment and activation of the phosphatases PTPN6 and PTPN11. It also reduces the increase of intracellular calcium evoked by B-cell receptor ligation. May also play its inhibitory role independently of SH2-containing phosphatases. Modulates cytokine production in CD4+ T-cells, down-regulating IL2 and IFNG production while inducing secretion of transforming growth factor beta. Also down-regulates IgG and IgE production in B-cells as well as IL8, IL10 and TNF secretion. Inhibits proliferation and induces apoptosis in myeloid leukemia cell lines as well as prevents nuclear translocation of NF-kappa-B p65 subunit/RELA and phosphorylation of I-kappa-B alpha/CHUK in these cells. Inhibits the differentiation of peripheral blood precursors towards dendritic cells. This chain is Leukocyte-associated immunoglobulin-like receptor 1 (LAIR1), found in Homo sapiens (Human).